Consider the following 115-residue polypeptide: NAD(P)H-quinone oxidoreductase subunit M (115 aa).

It belongs to the complex I NdhM subunit family. NDH-1 can be composed of about 15 different subunits; different subcomplexes with different compositions have been identified which probably have different functions.

It localises to the cellular thylakoid membrane. It catalyses the reaction a plastoquinone + NADH + (n+1) H(+)(in) = a plastoquinol + NAD(+) + n H(+)(out). The catalysed reaction is a plastoquinone + NADPH + (n+1) H(+)(in) = a plastoquinol + NADP(+) + n H(+)(out). Its function is as follows. NDH-1 shuttles electrons from an unknown electron donor, via FMN and iron-sulfur (Fe-S) centers, to quinones in the respiratory and/or the photosynthetic chain. The immediate electron acceptor for the enzyme in this species is believed to be plastoquinone. Couples the redox reaction to proton translocation, and thus conserves the redox energy in a proton gradient. Cyanobacterial NDH-1 also plays a role in inorganic carbon-concentration. The chain is NAD(P)H-quinone oxidoreductase subunit M from Prochlorococcus marinus (strain NATL1A).